The chain runs to 812 residues: Probable inorganic carbon transporter subunit DabA (812 aa).

4 residues coordinate Zn(2+): C339, D341, H501, and C516.

It belongs to the inorganic carbon transporter (TC 9.A.2) DabA family. As to quaternary structure, forms a complex with DabB. Requires Zn(2+) as cofactor.

The protein resides in the cell inner membrane. Functionally, part of an energy-coupled inorganic carbon pump. The protein is Probable inorganic carbon transporter subunit DabA of Xanthomonas axonopodis pv. citri (strain 306).